Here is an 862-residue protein sequence, read N- to C-terminus: Active breakpoint cluster region-related protein (862 aa).

The disordered stretch occupies residues 30–84; the sequence is DAEGNEEHKSSREGSETMPYIDESPTMSPQLSARSQDSVDGVSPTPTEVLLPGGE. Basic and acidic residues predominate over residues 34–44; that stretch reads NEEHKSSREGS. A compositionally biased stretch (polar residues) spans 54 to 67; it reads PTMSPQLSARSQDS. Residues 93–286 enclose the DH domain; it reads MRKLVLSGVL…QNFLSSINED (194 aa). Residues 303–462 form the PH domain; sequence QLVKDGFLVE…WREAIQKLQK (160 aa). The region spanning 488–616 is the C2 domain; that stretch reads VHNVPIISHK…QSKNWHDDVI (129 aa). In terms of domain architecture, Rho-GAP spans 650–848; the sequence is VKISVVTKRE…YYLQHPPISF (199 aa).

It is found in the cell projection. The protein resides in the dendritic spine. It localises to the axon. Its subcellular location is the synapse. In terms of biological role, protein with a unique structure having two opposing regulatory activities toward small GTP-binding proteins. The C-terminus is a GTPase-activating protein domain which stimulates GTP hydrolysis by RAC1, RAC2 and CDC42. Accelerates the intrinsic rate of GTP hydrolysis of RAC1 or CDC42, leading to down-regulation of the active GTP-bound form. The central Dbl homology (DH) domain functions as guanine nucleotide exchange factor (GEF) that modulates the GTPases CDC42, RHOA and RAC1. Promotes the conversion of CDC42, RHOA and RAC1 from the GDP-bound to the GTP-bound form. The sequence is that of Active breakpoint cluster region-related protein (abr) from Xenopus tropicalis (Western clawed frog).